The following is a 153-amino-acid chain: Pheromone-binding protein Gp-9 (153 aa).

The N-terminal stretch at 1-19 (MKTLILHICIFALVAFASA) is a signal peptide. Disulfide bonds link cysteine 37–cysteine 77, cysteine 73–cysteine 129, and cysteine 118–cysteine 138.

It belongs to the PBP/GOBP family. As to quaternary structure, homodimer.

It is found in the secreted. Functionally, colony queen number, a major feature of social organization, is associated with worker genotype for Gp-9. Colonies are headed by either a single reproductive queen (monogyne form) or multiple queens (polygyne form). Differences in worker Gp-9 genotypes between social forms may cause differences in workers' abilities to recognize queens and regulate their numbers. The protein is Pheromone-binding protein Gp-9 of Solenopsis nigella gensterblumi (Fire ant).